A 163-amino-acid chain; its full sequence is Nucleotide-binding protein HSM_1099 (163 aa).

Belongs to the YajQ family.

Nucleotide-binding protein. This Histophilus somni (strain 2336) (Haemophilus somnus) protein is Nucleotide-binding protein HSM_1099.